We begin with the raw amino-acid sequence, 153 residues long: MRFFLKLAPRCSVLLLLLLVTASRGLNIGDLLGSTPAKDQGCSRTCESQFCTIAPLLRYGKYCGILYSGCPGERPCDALDACCMVHDHCVDTHNDDYLNTMCNENLLSCIDRVSGATFPGNKCNVGQTASVIRGVIETAVFAGKILHKRDDGQ.

A signal peptide spans 1-25 (MRFFLKLAPRCSVLLLLLLVTASRG). Cystine bridges form between cysteine 42–cysteine 70, cysteine 46–cysteine 76, cysteine 51–cysteine 123, cysteine 63–cysteine 83, cysteine 82–cysteine 109, and cysteine 89–cysteine 102. 3 residues coordinate Ca(2+): tyrosine 62, glycine 64, and tyrosine 67. Histidine 86 is a catalytic residue. Aspartate 87 lines the Ca(2+) pocket.

It belongs to the phospholipase A2 family. The cofactor is Ca(2+).

The protein localises to the secreted. It catalyses the reaction a 1,2-diacyl-sn-glycero-3-phosphocholine + H2O = a 1-acyl-sn-glycero-3-phosphocholine + a fatty acid + H(+). PA2 catalyzes the calcium-dependent hydrolysis of the 2-acyl groups in 3-sn-phosphoglycerides. Releases lysophospholipids (LPLs) and free fatty acids (FFAs) from membrane phospholipids in response to hormones and other external stimuli. This is Probable phospholipase A2 homolog 2 (PLA2-II) from Oryza sativa subsp. japonica (Rice).